A 466-amino-acid chain; its full sequence is Adenosylhomocysteinase (466 aa).

Substrate is bound by residues T57, D132, and E192. 193 to 195 contacts NAD(+); that stretch reads TTT. Substrate contacts are provided by K222 and D226. NAD(+) is bound by residues N227, 256–261, E279, N314, 335–337, and N380; these read GYGDVG and IGH.

Belongs to the adenosylhomocysteinase family. NAD(+) serves as cofactor.

Its subcellular location is the cytoplasm. The catalysed reaction is S-adenosyl-L-homocysteine + H2O = L-homocysteine + adenosine. It functions in the pathway amino-acid biosynthesis; L-homocysteine biosynthesis; L-homocysteine from S-adenosyl-L-homocysteine: step 1/1. In terms of biological role, may play a key role in the regulation of the intracellular concentration of adenosylhomocysteine. In Rhizobium etli (strain ATCC 51251 / DSM 11541 / JCM 21823 / NBRC 15573 / CFN 42), this protein is Adenosylhomocysteinase.